The sequence spans 622 residues: Low affinity potassium transport system protein Kup (622 aa).

Transmembrane regions (helical) follow at residues 9–29 (LSAV…TSPL), 46–66 (PDVV…VVSV), 101–121 (ILVV…VITP), 137–157 (PALD…LFVI), 165–185 (VGKL…LLGL), 213–233 (VSFF…ALYA), 247–267 (WFTV…ALLL), 276–296 (PFFL…ATLA), 337–357 (IYIP…IIGF), 363–383 (LAAA…ILFC), 395–415 (FLVV…FSAN), and 416–436 (VLKL…MFII).

Belongs to the HAK/KUP transporter (TC 2.A.72) family.

The protein resides in the cell inner membrane. The enzyme catalyses K(+)(in) + H(+)(in) = K(+)(out) + H(+)(out). Its function is as follows. Responsible for the low-affinity transport of potassium into the cell. Likely operates as a K(+):H(+) symporter. This chain is Low affinity potassium transport system protein Kup, found in Yersinia pestis (strain Pestoides F).